The primary structure comprises 965 residues: Phosphatidylethanolamine N-methyltransferase (965 aa).

The disordered stretch occupies residues 1–55 (MSSSAADPFAARLNSDVRQRHPTASATSKNVEGTSQQKQQQQQQQSEANAAASRV). Over 1 to 91 (MSSSAADPFA…DPREPKNLSD (91 aa)) the chain is Lumenal. Residues 22–35 (PTASATSKNVEGTS) are compositionally biased toward polar residues. Residues 36–45 (QQKQQQQQQQ) are compositionally biased toward low complexity. A helical membrane pass occupies residues 92 to 112 (VAVLAIIALHFLAAYYLPWGV). At 113-115 (KRP) the chain is on the cytoplasmic side. Residues 116-136 (LFAAIFMFWRLAYNVGIGYLL) form a helical membrane-spanning segment. Over 137–201 (TIQSKYKLLV…EYNTWLTFRR (65 aa)) the chain is Lumenal. A helical membrane pass occupies residues 202 to 222 (VVDLILMCDFISYCLFAIVCA). Residues 223–229 (HKPDGEG) lie on the Cytoplasmic side of the membrane. A helical transmembrane segment spans residues 230 to 250 (LFMCFARWAAGITLVGFNLWV). Residues 251–279 (KLDAHRVVKDYAWYWGDFFYLIEQELTFD) lie on the Lumenal side of the membrane. Residues 280-300 (GVFELAPHPMYSIGYAGYYGI) form a helical membrane-spanning segment. Residues 301 to 306 (SMMAAS) are Cytoplasmic-facing. The helical transmembrane segment at 307-327 (YDVLFISIIAHAAQFAFLVIV) threads the bilayer. The Lumenal segment spans residues 328 to 389 (ENPHIEKTYN…IGLKNLDFFR (62 aa)). The chain crosses the membrane as a helical span at residues 390–410 (ITDVAIVLLCAYLAVVTMVTP). The Cytoplasmic portion of the chain corresponds to 411 to 417 (NTRFYQA). Residues 418-438 (LFVLHALAWRLWYSAGLGVIL) traverse the membrane as a helical segment. The Lumenal portion of the chain corresponds to 439-467 (TMQSEEKMFTRHFLKYGESVGEAWRQWKG). A helical membrane pass occupies residues 468 to 488 (IYHLSNCLCHASFIAASYKMY). Residues 489-496 (EFPADWTY) are Cytoplasmic-facing. A helical transmembrane segment spans residues 497–517 (GWALLKHVVGLSLIALQVWTA). At 518–573 (TSIYESLGEFGWFYGDFFFDSKRQLTYTSIYRFLNNPERVFGTAGLWGAALITWSR) the chain is on the lumenal side. A helical transmembrane segment spans residues 574–594 (AIFLMALAGHFLTLAFLAYVE). Topologically, residues 595–965 (KPHMQKVYGR…TTPVDSKFSE (371 aa)) are cytoplasmic.

The protein belongs to the class VI-like SAM-binding methyltransferase superfamily. CHO2 family.

The protein localises to the endoplasmic reticulum membrane. It carries out the reaction a 1,2-diacyl-sn-glycero-3-phosphoethanolamine + S-adenosyl-L-methionine = a 1,2-diacyl-sn-glycero-3-phospho-N-methylethanolamine + S-adenosyl-L-homocysteine + H(+). It functions in the pathway phospholipid metabolism; phosphatidylcholine biosynthesis. Its function is as follows. Catalyzes the first step of the methylation pathway of phosphatidylcholine biosynthesis, the SAM-dependent methylation of phosphatidylethanolamine (PE) to phosphatidylmonomethylethanolamine (PMME). The protein is Phosphatidylethanolamine N-methyltransferase of Neurospora crassa (strain ATCC 24698 / 74-OR23-1A / CBS 708.71 / DSM 1257 / FGSC 987).